Reading from the N-terminus, the 290-residue chain is Undecaprenyl-diphosphatase (290 aa).

The next 8 membrane-spanning stretches (helical) occupy residues 5–25 (IGIF…YFPI), 44–64 (GTAY…TYFY), 88–108 (VRLF…GLAL), 122–142 (LSVI…SESL), 152–172 (IRVI…VPGV), 195–215 (FSFL…LKVL), 226–246 (PIVA…AWLL), and 255–275 (LVFV…LAAG).

Belongs to the UppP family.

It is found in the cell inner membrane. The enzyme catalyses di-trans,octa-cis-undecaprenyl diphosphate + H2O = di-trans,octa-cis-undecaprenyl phosphate + phosphate + H(+). Its function is as follows. Catalyzes the dephosphorylation of undecaprenyl diphosphate (UPP). Confers resistance to bacitracin. The chain is Undecaprenyl-diphosphatase from Gloeobacter violaceus (strain ATCC 29082 / PCC 7421).